Reading from the N-terminus, the 519-residue chain is FAD-dependent monooxygenase macF (519 aa).

Residues 1 to 20 (MTKMTSIIGILMGVLTTATA) form the signal peptide. Residues 88–262 (CRLNASCIVT…TEYDLTTNTG (175 aa)) enclose the FAD-binding PCMH-type domain. His-125 is subject to Pros-8alpha-FAD histidine.

Belongs to the oxygen-dependent FAD-linked oxidoreductase family.

Its pathway is secondary metabolite biosynthesis; terpenoid biosynthesis. Its function is as follows. FAD-dependent monooxygenase; part of the gene cluster that mediates the biosynthesis of macrophorins, isoprenoid epoxycyclohexenones containing cyclized drimane moieties. The first step of the pathway is the synthesis of 6-methylsalicylic acid (6-MSA) by the polyketide synthase macA. 6-MSA is then converted to m-cresol by the decarboxylase macB. The cytochrome P450 monooxygenase macC then catalyzes the oxidation of m-cresol to toluquinol. Epoxidation of toluquinol is then performed by the short chain dehydrogenase macD, with the help of macE, and a further prenylation by macG leads to 7-deacetoxyyanuthone A. The next step is the hydroxylation of C-22 of 7-deacetoxyyanuthone A by the cytochrome P450 monooxygenase macH to yield 22-deacetylyanuthone A. O-Mevalon transferase macI then attaches mevalon to the hydroxyl group of 22-deacetylyanuthone A to produce yanuthone E. The terpene cyclase macJ catalyzes the cyclization of 22-deacetylyanuthone A to macrophorin A. MacJ is also able to catalyze cyclization of yanuthone E and 7-deacetoxyyanuthone A to their corresponding macrophorins. The macJ products can be further modified by macH and macJ, as well as by the FAD-dependent monooxygenase macF, to produce additional macrophorins, including 4'-oxomacrophorin A, 4'-oxomacrophorin D and 4'-oxomacrophorin E. This is FAD-dependent monooxygenase macF from Penicillium terrestre.